A 321-amino-acid chain; its full sequence is MKKRCLITGGAGFIGSHLAEELVKRGHPVTIVDNFYKGKSKYHEELTGNIPIIPISILDKNSMHELVNQHDVVFHLAAILGVKTTMEKSIELIETNFDGTRNILQAALKGKKKVIFASTSEVYGKGTPPFSEDDDRLYGATSKIRWSYAICKTLEETLCLGYALQGLPVTIVRYFNIYGPRAKDGPYAGVIPRFIRAALQGDDLLVYGDGKQTRCFTYVSDAVEATIAAMDEKVNGEIINIGSEDEKSIQEVAQDIHQLTHSSSKIVHVPFEKVYPHGFEEIPNRKPDVTKLKEMCQFHPNVSWEQGLKETIQWFREIEND.

Residues Gly-12, Phe-13, Ile-14, Asp-33, Asn-34, Tyr-36, Gly-38, Leu-76, Thr-95, Ala-117, Tyr-148, and Lys-152 each coordinate NAD(+). The Proton acceptor role is filled by Tyr-148.

The protein belongs to the NAD(P)-dependent epimerase/dehydratase family. Homodimer. It depends on NAD(+) as a cofactor.

The catalysed reaction is UDP-2-acetamido-2-deoxy-alpha-D-glucuronate + H(+) = UDP-N-acetyl-alpha-D-xylosamine + CO2. With respect to regulation, activity is completely inhibited by NADH but not by NADPH. In terms of biological role, decarboxylase involved in the biosynthesis of the nucleotide-sugar UDP-N-acetylxylosamine (UDP-XylNAc). Catalyzes the NAD-dependent decarboxylation of UDP-N-acetylglucosaminuronic acid (UDP-GlcNAcA) to UDP-XylNAc. Cannot use other UDP-uronates, such as UDP-glucuronic acid (UDP-GlcA) and UDP-galacturonic acid (UDP-GalA). The protein is UDP-N-acetyl-alpha-D-glucosaminuronate decarboxylase of Bacillus cytotoxicus (strain DSM 22905 / CIP 110041 / 391-98 / NVH 391-98).